Consider the following 95-residue polypeptide: Pyruvate synthase subunit PorD (95 aa).

4Fe-4S ferredoxin-type domains follow at residues 34–63 and 64–93; these read FRPVYIYEKCTKCGICHIVCPDMSVKPREN and GFFEYDYDYCKGCGICANECPADAIEMILE. The [4Fe-4S] cluster site is built by Cys43, Cys46, Cys49, Cys53, Cys73, Cys76, Cys79, and Cys83.

In terms of assembly, heterotetramer of one alpha, one beta, one delta and one gamma chain. It depends on [4Fe-4S] cluster as a cofactor.

The sequence is that of Pyruvate synthase subunit PorD (porD) from Methanosarcina barkeri (strain Fusaro / DSM 804).